The chain runs to 338 residues: (-)-alpha-amorphene synthase ((2E,6E)-farnesyl diphosphate cyclizing) (338 aa).

2 residues coordinate Mg(2+): aspartate 105 and glutamate 109. The DDXXE motif signature appears at 105-109 (DDRAE). Position 196 (arginine 196) interacts with substrate. Serine 246 contacts Mg(2+). Position 249 (lysine 249) interacts with substrate. Mg(2+) is bound at residue glutamate 250. 327 to 328 (RY) lines the substrate pocket.

This sequence belongs to the terpene synthase family. Requires Mg(2+) as cofactor.

The enzyme catalyses (2E,6E)-farnesyl diphosphate = (-)-alpha-amorphene + diphosphate. It functions in the pathway secondary metabolite biosynthesis; terpenoid biosynthesis. In terms of biological role, catalyzes the conversion of (2E,6E)-farnesyl diphosphate (FPP) to yield the bicyclic sesquiterpene (1R,6S,7S)-(-)-alpha-amorphene via a probable 1,6-cyclization, which could involve the abstraction of the pyrophosphate from FPP to yield a (R)-bisabolyl cation. The only accepted substrate is (2E,6E)-farnesyl diphosphate (FPP). The chain is (-)-alpha-amorphene synthase ((2E,6E)-farnesyl diphosphate cyclizing) from Streptomyces viridochromogenes (strain DSM 40736 / JCM 4977 / BCRC 1201 / Tue 494).